The sequence spans 736 residues: Gephyrin (736 aa).

An MPT Mo-transferase region spans residues 14-153 (QIRVGVLTVS…LPGSKKGSQE (140 aa)). Disordered stretches follow at residues 181–232 (DELE…DSSS) and 260–290 (TASL…PKVQ). A compositionally biased stretch (pro residues) spans 187 to 199 (PSPPPPLSPPPTT). Positions 261–290 (ASLSTTPSESPRAQATSRLSTASCPTPKVQ) are enriched in polar residues. Residues 294 to 736 (SSKENILRAS…VVDVMVIGRL (443 aa)) are MPT adenylyltransferase.

In the N-terminal section; belongs to the MoaB/Mog family. The protein in the C-terminal section; belongs to the MoeA family. Homotrimer, homodimer and homooligomer. Interacts with glycine receptors. The cofactor is Mg(2+).

It localises to the postsynaptic cell membrane. It is found in the cell membrane. Its subcellular location is the cytoplasm. The protein localises to the cytosol. The protein resides in the cytoskeleton. It localises to the cell projection. It is found in the dendrite. Its subcellular location is the postsynaptic density. The catalysed reaction is molybdopterin + ATP + H(+) = adenylyl-molybdopterin + diphosphate. It carries out the reaction adenylyl-molybdopterin + molybdate = Mo-molybdopterin + AMP + H(+). It participates in cofactor biosynthesis; molybdopterin biosynthesis. Its function is as follows. Microtubule-associated protein involved in membrane protein-cytoskeleton interactions. It is thought to anchor the inhibitory glycine receptor (GLYR) to subsynaptic microtubules. Acts as a major instructive molecule at inhibitory synapses, where it also clusters GABA type A receptors. In terms of biological role, also has a catalytic activity and catalyzes two steps in the biosynthesis of the molybdenum cofactor. In the first step, molybdopterin is adenylated. Subsequently, molybdate is inserted into adenylated molybdopterin and AMP is released. This is Gephyrin (GPHN) from Gallus gallus (Chicken).